A 117-amino-acid chain; its full sequence is Large ribosomal subunit protein bL19 (117 aa).

Belongs to the bacterial ribosomal protein bL19 family.

In terms of biological role, this protein is located at the 30S-50S ribosomal subunit interface and may play a role in the structure and function of the aminoacyl-tRNA binding site. In Shewanella piezotolerans (strain WP3 / JCM 13877), this protein is Large ribosomal subunit protein bL19.